Here is a 102-residue protein sequence, read N- to C-terminus: MADFLKGLPVYNKSNFSRFHADSVCKASNRRPSVYLPTREYPSEQIIVTEKTNILLRYLHQQWDKKNAAKKRDQEQVEIEGENSAPPRKIARTDSQDMNEDT.

The disordered stretch occupies residues 67 to 102 (NAAKKRDQEQVEIEGENSAPPRKIARTDSQDMNEDT).

Belongs to the DDA1 family. Component of numerous DCX (DDB1-CUL4-X-box) E3 ubiquitin-protein ligase complexes which consist of a core of DDB1, cullin-4 (CUL4A or CUL4B), DDA1 and RBX1.

Its pathway is protein modification; protein ubiquitination. Functionally, functions as a component of numerous distinct DCX (DDB1-CUL4-X-box) E3 ubiquitin-protein ligase complexes which mediate the ubiquitination and subsequent proteasomal degradation of target proteins. In the DCX complexes, acts as a scaffolding subunit required to stabilize the complex. The chain is DET1- and DDB1-associated protein 1 from Gallus gallus (Chicken).